Consider the following 868-residue polypeptide: Aconitate hydratase B (868 aa).

Residues arginine 192, 235–237 (SSR), 404–406 (QDT), and serine 488 each bind substrate. The [4Fe-4S] cluster site is built by cysteine 700, cysteine 758, and cysteine 761. Arginine 780 and arginine 785 together coordinate substrate.

The protein belongs to the aconitase/IPM isomerase family. As to quaternary structure, monomer. [4Fe-4S] cluster is required as a cofactor.

The catalysed reaction is citrate = D-threo-isocitrate. It catalyses the reaction (2S,3R)-3-hydroxybutane-1,2,3-tricarboxylate = 2-methyl-cis-aconitate + H2O. The protein operates within carbohydrate metabolism; tricarboxylic acid cycle; isocitrate from oxaloacetate: step 2/2. It functions in the pathway organic acid metabolism; propanoate degradation. Its function is as follows. Involved in the catabolism of short chain fatty acids (SCFA) via the tricarboxylic acid (TCA)(acetyl degradation route) and probably via the 2-methylcitrate cycle I (propionate degradation route). Catalyzes the reversible isomerization of citrate to isocitrate via cis-aconitate. Catalyzes the hydration of 2-methyl-cis-aconitate to yield (2R,3S)-2-methylisocitrate. The apo form of AcnB functions as a RNA-binding regulatory protein. This chain is Aconitate hydratase B (acnB), found in Synechocystis sp. (strain ATCC 27184 / PCC 6803 / Kazusa).